The chain runs to 418 residues: Sterigmatocystin 8-O-methyltransferase (418 aa).

Residues 1 to 41 (MALPSKAALVGLANTLSEQVKRYLATAGETKSPEDHKLCIE) constitute a propeptide that is removed on maturation. 170–176 (MRSGASF) is a binding site for substrate. The substrate binding stretch occupies residues 206 to 225 (LFDYYSTVDEVRGRRFDLGM). S-adenosyl-L-methionine-binding positions include 254-255 (GG), aspartate 277, 297-298 (DI), and arginine 313. Histidine 317 acts as the Proton acceptor in catalysis.

This sequence belongs to the class I-like SAM-binding methyltransferase superfamily. Cation-independent O-methyltransferase family. COMT subfamily.

It is found in the cytoplasm. Its subcellular location is the vacuole. It catalyses the reaction sterigmatocystin + S-adenosyl-L-methionine = 8-O-methylsterigmatocystin + S-adenosyl-L-homocysteine + H(+). The enzyme catalyses dihydrosterigmatocystin + S-adenosyl-L-methionine = 8-O-methyldihydrosterigmatocystin + S-adenosyl-L-homocysteine + H(+). Its pathway is mycotoxin biosynthesis; aflatoxin biosynthesis. Functionally, sterigmatocystin 8-O-methyltransferase; part of the gene cluster that mediates the biosynthesis of aflatoxins, a group of polyketide-derived furanocoumarins, and part of the most toxic and carcinogenic compounds among the known mycotoxins. The four major aflatoxins produced by A.parasiticus are aflatoxin B1 (AFB1), aflatoxin B2 (AFB2), aflatoxin G1 (AFG1) and aflatoxin G2 (AFG2). Within the aflatoxin pathway, the O-methyltransferase aflP uses both sterigmatocystin (ST) and dihydrosterigmatocystin (DHST) as substrates to yield O-methylsterigmatocystin (OMST) and dihydro-O-methylsterigmatocystin (DHOMST), respectively. The biosynthesis of aflatoxins begins with the norsolorinic acid synthase aflC that combines a hexanoyl starter unit produced by the fatty acid synthase aflA/aflB and 7 malonyl-CoA extender units to synthesize the precursor NOR. The second step is the conversion of NOR to averantin and requires the norsolorinic acid ketoreductase aflD, which catalyzes the dehydration of norsolorinic acid to form (1'S)-averantin. The norsolorinic acid reductases aflE and aflF may also play a role in the conversion of NOR to AVN. The cytochrome P450 monooxygenase aflG then catalyzes the hydroxylation of AVN to 5'hydroxyaverantin (HAVN). The next step is performed by the 5'-hydroxyaverantin dehydrogenase aflH that transforms HAVN to 5'-oxoaverantin (OAVN) which is further converted to averufin (AVF) by aflK that plays a dual role in the pathway, as a 5'-oxoaverantin cyclase that mediates conversion of 5'-oxoaverantin, as well as a versicolorin B synthase in a later step in the pathway. The averufin oxidase aflI catalyzes the conversion of AVF to versiconal hemiacetal acetate (VHA). VHA is then the substrate for the versiconal hemiacetal acetate esterase aflJ to yield versiconal (VAL). Versicolorin B synthase aflK then converts VAL to versicolorin B (VERB) by closing the bisfuran ring of aflatoxin which is required for DNA-binding, thus giving to aflatoxin its activity as a mutagen. Then, the activity of the versicolorin B desaturase aflL leads to versicolorin A (VERA). A branch point starts from VERB since it can also be converted to dihydrodemethylsterigmatocystin (DMDHST), probably also by aflL, VERA being a precursor for aflatoxins B1 and G1, and DMDHST for aflatoxins B2 and G2. Next, the versicolorin reductase aflM and the cytochrome P450 monooxygenase aflN are involved in conversion of VERA to demethylsterigmatocystin (DMST). AflX and aflY seem also involved in this step, through probable aflX-mediated epoxide ring-opening step following versicolorin A oxidation and aflY-mediated Baeyer-Villiger oxidation required for the formation of the xanthone ring. The methyltransferase aflO then leads to the modification of DMST to sterigmatocystin (ST), and of DMDHST to dihydrosterigmatocystin (DHST). Both ST and DHST are then substrates of the O-methyltransferase aflP to yield O-methylsterigmatocystin (OMST) and dihydro-O-methylsterigmatocystin (DHOMST), respectively. Finally OMST is converted to aflatoxins B1 and G1, and DHOMST to aflatoxins B2 and G2, via the action of several enzymes including O-methylsterigmatocystin oxidoreductase aflQ, the cytochrome P450 monooxygenase aflU, but also the NADH-dependent flavin oxidoreductase nadA which is specifically required for the synthesis of AFG1. The chain is Sterigmatocystin 8-O-methyltransferase from Aspergillus parasiticus (strain ATCC 56775 / NRRL 5862 / SRRC 143 / SU-1).